The sequence spans 403 residues: S-adenosylmethionine synthase (403 aa).

H15 lines the ATP pocket. Residue D17 participates in Mg(2+) binding. E43 provides a ligand contact to K(+). The L-methionine site is built by E56 and Q99. Residues 99–109 are flexible loop; sequence QSPDINQGVDR. Residues 166–168, 232–233, D241, 247–248, A264, and K268 each bind ATP; these read DAK, KF, and RK. L-methionine is bound at residue D241. L-methionine is bound at residue K272.

This sequence belongs to the AdoMet synthase family. In terms of assembly, homotetramer; dimer of dimers. It depends on Mg(2+) as a cofactor. K(+) is required as a cofactor.

It localises to the cytoplasm. The catalysed reaction is L-methionine + ATP + H2O = S-adenosyl-L-methionine + phosphate + diphosphate. It functions in the pathway amino-acid biosynthesis; S-adenosyl-L-methionine biosynthesis; S-adenosyl-L-methionine from L-methionine: step 1/1. Its function is as follows. Catalyzes the formation of S-adenosylmethionine (AdoMet) from methionine and ATP. The overall synthetic reaction is composed of two sequential steps, AdoMet formation and the subsequent tripolyphosphate hydrolysis which occurs prior to release of AdoMet from the enzyme. The protein is S-adenosylmethionine synthase of Xanthomonas axonopodis pv. citri (strain 306).